Reading from the N-terminus, the 262-residue chain is MSTHSNHPFHLVDYSPWPLTGAIGAMTTVSGMVKWFHQYDISLFVLGNIITILTVYQWWRDVSREGTYQGLHTYAVTIGLRWGMILFILSEVLFFVSFFWAFFHSSLSPAIELGASWPPMGIISFNPFQIPLLNTAILLASGVTVTWAHHSLMENNHSQTTQGLFFTVLLGIYFTILQAYEYIEAPFTIADSIYGSTFFMATGFHGIHVLIGTTFLLVCLLRHLNNHFSKNHHFGFEAAAWYWHFVDVVWLFLYITIYWWGG.

Transmembrane regions (helical) follow at residues 39-59 (YDIS…YQWW), 83-103 (GMIL…WAFF), 120-140 (MGII…ILLA), 163-183 (GLFF…YEYI), 198-218 (FFMA…FLLV), and 240-260 (AWYW…IYWW).

Belongs to the cytochrome c oxidase subunit 3 family. Component of the cytochrome c oxidase (complex IV, CIV), a multisubunit enzyme composed of a catalytic core of 3 subunits and several supernumerary subunits. The complex exists as a monomer or a dimer and forms supercomplexes (SCs) in the inner mitochondrial membrane with ubiquinol-cytochrome c oxidoreductase (cytochrome b-c1 complex, complex III, CIII).

The protein localises to the mitochondrion inner membrane. The enzyme catalyses 4 Fe(II)-[cytochrome c] + O2 + 8 H(+)(in) = 4 Fe(III)-[cytochrome c] + 2 H2O + 4 H(+)(out). Functionally, component of the cytochrome c oxidase, the last enzyme in the mitochondrial electron transport chain which drives oxidative phosphorylation. The respiratory chain contains 3 multisubunit complexes succinate dehydrogenase (complex II, CII), ubiquinol-cytochrome c oxidoreductase (cytochrome b-c1 complex, complex III, CIII) and cytochrome c oxidase (complex IV, CIV), that cooperate to transfer electrons derived from NADH and succinate to molecular oxygen, creating an electrochemical gradient over the inner membrane that drives transmembrane transport and the ATP synthase. Cytochrome c oxidase is the component of the respiratory chain that catalyzes the reduction of oxygen to water. Electrons originating from reduced cytochrome c in the intermembrane space (IMS) are transferred via the dinuclear copper A center (CU(A)) of subunit 2 and heme A of subunit 1 to the active site in subunit 1, a binuclear center (BNC) formed by heme A3 and copper B (CU(B)). The BNC reduces molecular oxygen to 2 water molecules using 4 electrons from cytochrome c in the IMS and 4 protons from the mitochondrial matrix. This chain is Cytochrome c oxidase subunit 3 (mt:CoIII), found in Drosophila melanogaster (Fruit fly).